The sequence spans 435 residues: MTTETLDKPIKSAGYFTDGVAIVDPAVAAAMTRELEREQYQIELIASENIVSRAVLEAQGSVFTNKYAEGYPGRRYYQGCAPSDEVEQLAIDRAKQLFDCGYANVQPHSGAQANGAVMLALTKPGATILGMSLDAGGHLTHGAPPAMSGKWFNAVQYGVRADDHLVDFDQVEALAREHRPALIIAGGSAYPRTLDFARFRAIADDVGALLMVDMAHFAGLVAGGAHPSPMQYAHVVTTTTHKTLRGPRGGMILTNDEAIAKRINSAVFPGLQGGPLMHVIAAKAVAFGEALRPEFKDYAKATIANAQALANRLKARGADIVAGGTDTHLALIDLRPLGITGRDADEALERSAITCNKNGVPFDPLPPVKTSGIRVGSPAGTTRGFGIAEFEAIGDMVADVLDALRDKGEHGDADVEADVRGRVRALCERFPIYQG.

(6S)-5,6,7,8-tetrahydrofolate is bound by residues leucine 133 and 137–139 (GHL). At lysine 242 the chain carries N6-(pyridoxal phosphate)lysine.

Belongs to the SHMT family. As to quaternary structure, homodimer. Pyridoxal 5'-phosphate is required as a cofactor.

Its subcellular location is the cytoplasm. It catalyses the reaction (6R)-5,10-methylene-5,6,7,8-tetrahydrofolate + glycine + H2O = (6S)-5,6,7,8-tetrahydrofolate + L-serine. It functions in the pathway one-carbon metabolism; tetrahydrofolate interconversion. Its pathway is amino-acid biosynthesis; glycine biosynthesis; glycine from L-serine: step 1/1. Catalyzes the reversible interconversion of serine and glycine with tetrahydrofolate (THF) serving as the one-carbon carrier. This reaction serves as the major source of one-carbon groups required for the biosynthesis of purines, thymidylate, methionine, and other important biomolecules. Also exhibits THF-independent aldolase activity toward beta-hydroxyamino acids, producing glycine and aldehydes, via a retro-aldol mechanism. The chain is Serine hydroxymethyltransferase from Sphingopyxis alaskensis (strain DSM 13593 / LMG 18877 / RB2256) (Sphingomonas alaskensis).